Here is a 1357-residue protein sequence, read N- to C-terminus: DNA-directed RNA polymerase subunit beta (1357 aa).

Belongs to the RNA polymerase beta chain family. The RNAP catalytic core consists of 2 alpha, 1 beta, 1 beta' and 1 omega subunit. When a sigma factor is associated with the core the holoenzyme is formed, which can initiate transcription.

It carries out the reaction RNA(n) + a ribonucleoside 5'-triphosphate = RNA(n+1) + diphosphate. DNA-dependent RNA polymerase catalyzes the transcription of DNA into RNA using the four ribonucleoside triphosphates as substrates. The polypeptide is DNA-directed RNA polymerase subunit beta (Pseudomonas fluorescens (strain ATCC BAA-477 / NRRL B-23932 / Pf-5)).